Here is a 457-residue protein sequence, read N- to C-terminus: Paired box protein Pax-8 (457 aa).

Positions 9–135 (GHGGLNQLGG…SSINRIIRTK (127 aa)) form a DNA-binding region, paired. A PAI subdomain region spans residues 12 to 68 (GLNQLGGAFVNGRPLPEVVRQRIVDLAHQGVRPCDISRQLRVSHGCVSKILGRYYET). The segment at 87–135 (KVVEKIGDYKRQNPTMFAWEIRDRLLAEGVCDNDTVPSVSSINRIIRTK) is RED subdomain. Residues 159–182 (LIPSSAVTPPESPQSDSLGSTYSI) show a composition bias toward polar residues. Positions 159-224 (LIPSSAVTPP…SSSSGPRKHL (66 aa)) are disordered. Residue S304 is modified to Phosphoserine.

As to quaternary structure, interacts with WWTR1. Expressed in the developing excretory system and the thyroid gland.

The protein resides in the nucleus. Thought to encode a transcription factor. It may have a role in kidney cell differentiation. May play a regulatory role in mammalian development. This chain is Paired box protein Pax-8 (Pax8), found in Mus musculus (Mouse).